The chain runs to 246 residues: Ribosomal RNA large subunit methyltransferase E (246 aa).

S-adenosyl-L-methionine is bound by residues Gly81, Trp83, Asp104, Asp120, and Asp144. Lys184 acts as the Proton acceptor in catalysis.

The protein belongs to the class I-like SAM-binding methyltransferase superfamily. RNA methyltransferase RlmE family.

It localises to the cytoplasm. The enzyme catalyses uridine(2552) in 23S rRNA + S-adenosyl-L-methionine = 2'-O-methyluridine(2552) in 23S rRNA + S-adenosyl-L-homocysteine + H(+). Specifically methylates the uridine in position 2552 of 23S rRNA at the 2'-O position of the ribose in the fully assembled 50S ribosomal subunit. This Agrobacterium fabrum (strain C58 / ATCC 33970) (Agrobacterium tumefaciens (strain C58)) protein is Ribosomal RNA large subunit methyltransferase E.